The chain runs to 246 residues: 1-(5-phosphoribosyl)-5-[(5-phosphoribosylamino)methylideneamino] imidazole-4-carboxamide isomerase (246 aa).

Catalysis depends on D8, which acts as the Proton acceptor. D131 (proton donor) is an active-site residue.

It belongs to the HisA/HisF family.

The protein localises to the cytoplasm. It catalyses the reaction 1-(5-phospho-beta-D-ribosyl)-5-[(5-phospho-beta-D-ribosylamino)methylideneamino]imidazole-4-carboxamide = 5-[(5-phospho-1-deoxy-D-ribulos-1-ylimino)methylamino]-1-(5-phospho-beta-D-ribosyl)imidazole-4-carboxamide. The protein operates within amino-acid biosynthesis; L-histidine biosynthesis; L-histidine from 5-phospho-alpha-D-ribose 1-diphosphate: step 4/9. The sequence is that of 1-(5-phosphoribosyl)-5-[(5-phosphoribosylamino)methylideneamino] imidazole-4-carboxamide isomerase from Polaromonas naphthalenivorans (strain CJ2).